We begin with the raw amino-acid sequence, 440 residues long: MAEKSYYIITHGCQMNVHDSETIAGILESMGFVPSPEEKTADLIIINTCSVRETAENKVFTKIGELKKLKRENPDLVIGVGGCIPQQEKVAKRLLERFPHLDFIFGTHNLPELPKILERVFEKHERVLEVWQSEGQIVEGIPVKREPGVRAWVTIMYGCNNFCTYCIVPYVRGRERSRKKEDILQEIRQLVAEGYREVTLLGQNVNSYGKDLKGKPMFAELLADIEKIDGLWRVRFTTSHPRDLTDDVIEVMASSRKICEHLHLPVQAGSNKILKAMHRGYTREYYLNLVEKIRAKIPKVSFTTDIIVGFPGETEEDFEQTLDLVRKVRYDSAFTFVYNKRTGTPAAEMKDQVPEEVKSRRIQELIELQNGISLELNKNEEGNIHEILVEGKSKTDETKLAGRTRTNKLVVFNGNEDLVGKLVKVKITEGKLFHLEGVLV.

The MTTase N-terminal domain maps to 4–122 (KSYYIITHGC…LPKILERVFE (119 aa)). The [4Fe-4S] cluster site is built by Cys-13, Cys-49, Cys-83, Cys-159, Cys-163, and Cys-166. Positions 145–375 (REPGVRAWVT…IELQNGISLE (231 aa)) constitute a Radical SAM core domain. The region spanning 378 to 440 (KNEEGNIHEI…KLFHLEGVLV (63 aa)) is the TRAM domain.

Belongs to the methylthiotransferase family. MiaB subfamily. As to quaternary structure, monomer. The cofactor is [4Fe-4S] cluster.

Its subcellular location is the cytoplasm. The enzyme catalyses N(6)-dimethylallyladenosine(37) in tRNA + (sulfur carrier)-SH + AH2 + 2 S-adenosyl-L-methionine = 2-methylsulfanyl-N(6)-dimethylallyladenosine(37) in tRNA + (sulfur carrier)-H + 5'-deoxyadenosine + L-methionine + A + S-adenosyl-L-homocysteine + 2 H(+). Catalyzes the methylthiolation of N6-(dimethylallyl)adenosine (i(6)A), leading to the formation of 2-methylthio-N6-(dimethylallyl)adenosine (ms(2)i(6)A) at position 37 in tRNAs that read codons beginning with uridine. This Carboxydothermus hydrogenoformans (strain ATCC BAA-161 / DSM 6008 / Z-2901) protein is tRNA-2-methylthio-N(6)-dimethylallyladenosine synthase.